The primary structure comprises 361 residues: Isopentenyl-diphosphate delta-isomerase (361 aa).

Residue 12–13 (RK) coordinates substrate. FMN is bound by residues serine 70, 71-73 (SMT), serine 101, and asparagine 130. Residue 101–103 (SMR) participates in substrate binding. Residue glutamine 165 participates in substrate binding. Glutamate 166 is a Mg(2+) binding site. Residues lysine 197 and 310-311 (AG) contribute to the FMN site.

This sequence belongs to the IPP isomerase type 2 family. As to quaternary structure, homooctamer. Dimer of tetramers. Requires FMN as cofactor. The cofactor is NADPH. It depends on Mg(2+) as a cofactor.

Its subcellular location is the cytoplasm. The catalysed reaction is isopentenyl diphosphate = dimethylallyl diphosphate. In terms of biological role, involved in the biosynthesis of isoprenoids. Catalyzes the 1,3-allylic rearrangement of the homoallylic substrate isopentenyl (IPP) to its allylic isomer, dimethylallyl diphosphate (DMAPP). In Chlorobium luteolum (strain DSM 273 / BCRC 81028 / 2530) (Pelodictyon luteolum), this protein is Isopentenyl-diphosphate delta-isomerase.